The sequence spans 1647 residues: MATDGASCEPDASRAPEEAAGATAEAARKEFDVDTLSKSELRMLLSVMEGELEARDLVIEALRARRKEVFIQERYGRFNLNDPFLALQRDYEAGAGDKEKKPVCTNPLSILEAVMAHCRKMQERMATQLAAAESRQKKLEMEKLQLQALEQEHKKLAARLEEERGKNKQVVLMLVKECKQLSGKVIEEAQKLEEAMAKLEEEKKKTNELEEELSAEKRRSTEMEAQMEKQLSEFDTEREQLRAKLNREEAHTTDLKEEIDKMKKMIEQLKRGSDSKPSLSLPRKTKDRRLVSISVGTEGPLTRSVACQTDLAIEGTDHVKKSPLTVPGKPSPGSAKGSVCANAAHVRPGMDRQASHGDLTGSSAPSLPPASANRIEENGPSTGSTADLPSSTAPAPGSAAQSPVAAALGPAHSAQSPCTPAPAQPGLNPRVQAARFRFQGNANDPDQNGNTTQSPPSRDVSPTSRDNLVAKQLARNTVTQALSRFTSPAVGAAPRPGAPPTGDAGAYPPVGRTSLKTPGVARVDRGNPPPIPPKKPGLSQTPSPPHPQLKVIMDSSRASNAGAKVDNKTVASPPSSLPQGNRVISEENLPKSSSPQLPPKPSIDLTVAPAGCAVSALATSQVGAWPAETPGLNQPACSDSSLVIPTTTAFRSSINPVSASSCRPGASDSLLVTASGWSPSLTPLLMSGGPAPLAGRPTLLQQAAAQGNVTLLSMLLNEEGLDINYSCEDGHSALYSAAKNGHTDCVRLLLNAEAQVNAADKNGFTPLCAAAAQGHFECVELLIAYDANINHAADGGQTPLYLACKNGNKECIKLLLEAGTDRSVKTRDGWTPVHAAVDTGNVDSLKLLMYHRAPAHGNSLNEEEPESDVSDLDDGEESSEGESKPVVPADLINHADREGWTAAHIAASKGFKNCLEILCRHRGLEPERRDKCNRTVHDVATDDCKHLLENLNALKIPLRISVGEIQSGNYGSSDFECENTICVLHIRKQTSWDDFSKAVSQALTNHFQAISSDGWWSLEDTAFNNTADSDIGLSLDSVRAIMLGSVPWSAGQSFTQSPWDFMRKNKAEQVTVLLSGPQEGCLSSVAYASMIPLQMLQNYLRLVEQYHNVIFHGPEGSLQDYIVHQLALCLKHRQMAAGFSCEIVRAEVDAGFSKEQLVDLFISSACLIPVKQSPVKKKIIIILENLEKSSLSELLGDFLAPLEIRSPESPCTFQKGNGTSECYYFHENCFLMGTIAKACLQGADLLVQQHFRWVQLRWDGEPMHGLLQRFLRRKLVNKFRGQAPSPCDPVCKTIDWALSVWRQLNSCLARLGTPEALLGPKYFLSCPVVPGHAQATVKWMSKLWNAVIAPRVQEAILSRASVKRQPGFGQTTTKKHPSQGQQAVVKAALSILLNKAVLHGCPLPRAELDQHTADFKGGSFPLSLVSNYNSCSKKKENGAWRKVNTSPRRKSGRFSSPTWNKPDLSNEGIKNKTISQLNCNKNASLSKQKSLENDLSLMLNLDPRLSLGSDDEADLVKELQSMCSSKSESDISKIADSRDDLRTFDSSGNNPAFSATVNNPRMPVSQKEVSPLSSHQTTECSNNKSKTEPGVSRVKSFLPVPRSKVTQCSQNTKRSSSSSNTRQIEINNNSKEENWNLHKNEQTHRKT.

Disordered regions lie at residues 1 to 27, 202 to 222, 318 to 427, 440 to 468, and 482 to 604; these read MATDGASCEPDASRAPEEAAGATAEAA, EKKKTNELEEELSAEKRRSTE, HVKK…QPGL, GNANDPDQNGNTTQSPPSRDVSPTSRDNL, and LSRF…PSID. The stretch at 120–276 forms a coiled coil; that stretch reads KMQERMATQL…EQLKRGSDSK (157 aa). Residues 362–372 show a composition bias toward low complexity; sequence SSAPSLPPASA. The span at 379–388 shows a compositional bias: polar residues; sequence GPSTGSTADL. Residues 389 to 411 are compositionally biased toward low complexity; the sequence is PSSTAPAPGSAAQSPVAAALGPA. Residues 440-466 are compositionally biased toward polar residues; sequence GNANDPDQNGNTTQSPPSRDVSPTSRD. Residue Arg-484 is modified to Asymmetric dimethylarginine. A compositionally biased stretch (low complexity) spans 488–509; sequence PAVGAAPRPGAPPTGDAGAYPP. Positions 569–579 are enriched in polar residues; the sequence is TVASPPSSLPQ. ANK repeat units follow at residues 695-725, 729-758, 762-791, 795-824, and 828-857; these read GRPTLLQQAAAQGNVTLLSMLLNEEGLDINY, DGHSALYSAAKNGHTDCVRLLLNAEAQVNA, NGFTPLCAAAAQGHFECVELLIAYDANINH, GGQTPLYLACKNGNKECIKLLLEAGTDRSV, and DGWTPVHAAVDTGNVDSLKLLMYHRAPAHG. The interval 856–886 is disordered; sequence HGNSLNEEEPESDVSDLDDGEESSEGESKPV. Residues 861–880 are compositionally biased toward acidic residues; it reads NEEEPESDVSDLDDGEESSE. The ANK 6 repeat unit spans residues 898–928; the sequence is EGWTAAHIAASKGFKNCLEILCRHRGLEPER. The disordered stretch occupies residues 1436 to 1467; it reads ENGAWRKVNTSPRRKSGRFSSPTWNKPDLSNE. At Ser-1509 the chain carries Phosphoserine. Residues 1542–1647 form a disordered region; sequence RTFDSSGNNP…HKNEQTHRKT (106 aa). Polar residues-rich tracts occupy residues 1544–1559 and 1567–1584; these read FDSSGNNPAFSATVNN and KEVSPLSSHQTTECSNNK. Low complexity predominate over residues 1609–1623; sequence SQNTKRSSSSSNTRQ. A compositionally biased stretch (basic and acidic residues) spans 1630–1647; the sequence is SKEENWNLHKNEQTHRKT.

Interacts with CTTN/cortactin SH3 domain. Interacts with STRN, STRN4/zinedin and MOB4/phocein; this interactions mediate the association with the STRIPAK core complex and may regulate dendritic spine distribution of the STRIPAK complex in hippocampal neurons. Activation of glutamate receptors weakens the interaction with STRN and STRN4.

It is found in the cytoplasm. The protein resides in the cell cortex. The protein localises to the cell projection. Its subcellular location is the dendritic spine. Functionally, regulates the dendritic spine distribution of CTTN/cortactin in hippocampal neurons, and thus controls dendritic spinogenesis and dendritic spine maintenance. Associates with the striatin-interacting phosphatase and kinase (STRIPAK) core complex to regulate dendritic spine distribution of the STRIPAK complex in hippocampal neurons. This Microcebus murinus (Gray mouse lemur) protein is Cortactin-binding protein 2 (CTTNBP2).